The primary structure comprises 719 residues: DNA ligase (719 aa).

Residues 42–46, 92–93, and E126 contribute to the NAD(+) site; these read DAAYD and SL. K128 acts as the N6-AMP-lysine intermediate in catalysis. 4 residues coordinate NAD(+): R149, E185, K301, and K325. Positions 430, 433, 448, and 454 each coordinate Zn(2+). In terms of domain architecture, BRCT spans 640 to 719; it reads ATGSPVEGKT…DDWFKLVGED (80 aa).

This sequence belongs to the NAD-dependent DNA ligase family. LigA subfamily. The cofactor is Mg(2+). Mn(2+) serves as cofactor.

The catalysed reaction is NAD(+) + (deoxyribonucleotide)n-3'-hydroxyl + 5'-phospho-(deoxyribonucleotide)m = (deoxyribonucleotide)n+m + AMP + beta-nicotinamide D-nucleotide.. DNA ligase that catalyzes the formation of phosphodiester linkages between 5'-phosphoryl and 3'-hydroxyl groups in double-stranded DNA using NAD as a coenzyme and as the energy source for the reaction. It is essential for DNA replication and repair of damaged DNA. In Brucella ovis (strain ATCC 25840 / 63/290 / NCTC 10512), this protein is DNA ligase.